Here is a 338-residue protein sequence, read N- to C-terminus: MKVAVLMSGGIDSTVSALLLREQGYEVTGLTMVHLEREAGEKAARIANELQIEHKVVDLREPFQSAVVDYFCREYEQGHTPNPCVKCNEEIKFGLLLKAALDLGADKVASGHYARIDYDDKSQCYRLMKGVDPRKDQSYFLYRLKQQQLSRLIFPLGGYRKEEVREMARRYHLQLAEEKESQEVCFIPGDYREFIRPHVSYKEGSFLDRTGKILGRHRGIPFYTIGQRRGLAVSAGRPLYVLKIDPEKNQILLGENEVLFSKLLRFKQNHFICSQDFELLIKVKAKIRYAARESEAILHCIEDDIWELVFDEAQRAATPGQSVVYYQGDYVLGGGTIY.

ATP contacts are provided by residues 6–13 and methionine 32; that span reads LMSGGIDS. The active-site Nucleophile is the cysteine 87. A disulfide bond links cysteine 87 and cysteine 185. ATP is bound at residue glycine 111. An interaction with tRNA region spans residues 135–137; the sequence is KDQ. The active-site Cysteine persulfide intermediate is the cysteine 185. The interaction with tRNA stretch occupies residues 288 to 289; that stretch reads RY.

Belongs to the MnmA/TRMU family.

Its subcellular location is the cytoplasm. It carries out the reaction S-sulfanyl-L-cysteinyl-[protein] + uridine(34) in tRNA + AH2 + ATP = 2-thiouridine(34) in tRNA + L-cysteinyl-[protein] + A + AMP + diphosphate + H(+). Functionally, catalyzes the 2-thiolation of uridine at the wobble position (U34) of tRNA, leading to the formation of s(2)U34. The chain is tRNA-specific 2-thiouridylase MnmA from Syntrophomonas wolfei subsp. wolfei (strain DSM 2245B / Goettingen).